The chain runs to 350 residues: Flap endonuclease 1 (350 aa).

Residues 1–102 (MGVTALRELI…REIERRQKLK (102 aa)) are N-domain. Mg(2+) contacts are provided by Asp-31, Asp-84, Glu-156, Glu-158, Asp-177, Asp-179, and Asp-240. Positions 120–261 (EARKYAQMSA…TALRYVKSYG (142 aa)) are I-domain. The interaction with PCNA stretch occupies residues 339-347 (KQSTLDMFF).

The protein belongs to the XPG/RAD2 endonuclease family. FEN1 subfamily. In terms of assembly, interacts with PCNA. PCNA stimulates the nuclease activity without altering cleavage specificity. The cofactor is Mg(2+).

Functionally, structure-specific nuclease with 5'-flap endonuclease and 5'-3' exonuclease activities involved in DNA replication and repair. During DNA replication, cleaves the 5'-overhanging flap structure that is generated by displacement synthesis when DNA polymerase encounters the 5'-end of a downstream Okazaki fragment. Binds the unpaired 3'-DNA end and kinks the DNA to facilitate 5' cleavage specificity. Cleaves one nucleotide into the double-stranded DNA from the junction in flap DNA, leaving a nick for ligation. Also involved in the base excision repair (BER) pathway. Acts as a genome stabilization factor that prevents flaps from equilibrating into structures that lead to duplications and deletions. Also possesses 5'-3' exonuclease activity on nicked or gapped double-stranded DNA. This chain is Flap endonuclease 1, found in Ignicoccus hospitalis (strain KIN4/I / DSM 18386 / JCM 14125).